The following is a 278-amino-acid chain: Envelope glycoprotein L (278 aa).

A signal peptide spans 1–30 (MCRRPDCGFSFSPGPVILLWCCLLLPIVSS). In terms of domain architecture, gL betaherpesvirus-type spans 43–256 (VPAECPELTR…DKYYAGLPPE (214 aa)). The cysteines at positions 154 and 159 are disulfide-linked.

The protein belongs to the herpesviridae glycoprotein L (gL) family. Betaherpesvirinae gL subfamily. In terms of assembly, interacts with glycoprotein H (gH); this interaction is necessary for the correct processing and cell surface expression of gH. Forms the envelope pentamer complex (PC) composed of gH, gL, UL128, UL130, and UL131A. The pentamer interacts with host NRP2. Forms the envelope trimer complex composed of gH, gL, and gO. The trimer interacts with host PDGFRA. The trimer also interacts with host EPHA2.

The protein resides in the virion membrane. Its subcellular location is the host cell membrane. It localises to the host Golgi apparatus. It is found in the host trans-Golgi network. Its function is as follows. The heterodimer glycoprotein H-glycoprotein L is required for the fusion of viral and plasma membranes leading to virus entry into the host cell. Acts as a functional inhibitor of gH and maintains gH in an inhibited form. Upon binding to host integrins, gL dissociates from gH leading to activation of the viral fusion glycoproteins gB and gH. In human cytomegalovirus, forms two distincts complexes to mediate viral entry, a trimer and a pentamer at the surface of the virion envelope. The gH-gL-gO trimer is required for infection in fibroblasts by interacting with host PDGFRA, and in glioblastoma cells by interacting with host EPHA2. The gH-gL-UL128-UL130-UL131A pentamer is essential for viral entry in epithelial, endothelial and myeloid cells via interaction with host NRP2. This Human cytomegalovirus (strain 5035) (HHV-5) protein is Envelope glycoprotein L.